The following is a 364-amino-acid chain: Methylthioribose-1-phosphate isomerase (364 aa).

Residue Asp-254 is the Proton donor of the active site.

This sequence belongs to the eIF-2B alpha/beta/delta subunits family. MtnA subfamily.

Its subcellular location is the cytoplasm. It is found in the nucleus. The enzyme catalyses 5-(methylsulfanyl)-alpha-D-ribose 1-phosphate = 5-(methylsulfanyl)-D-ribulose 1-phosphate. Its pathway is amino-acid biosynthesis; L-methionine biosynthesis via salvage pathway; L-methionine from S-methyl-5-thio-alpha-D-ribose 1-phosphate: step 1/6. Catalyzes the interconversion of methylthioribose-1-phosphate (MTR-1-P) into methylthioribulose-1-phosphate (MTRu-1-P). This chain is Methylthioribose-1-phosphate isomerase, found in Drosophila sechellia (Fruit fly).